The chain runs to 215 residues: Cytochrome b6 (215 aa).

Residues I32 to F52 form a helical membrane-spanning segment. Position 35 (C35) interacts with heme c. The heme b site is built by H86 and H100. 3 helical membrane-spanning segments follow: residues A90–F110, L116–Y136, and L186–I206. Heme b is bound by residues H187 and H202.

It belongs to the cytochrome b family. PetB subfamily. In terms of assembly, the 4 large subunits of the cytochrome b6-f complex are cytochrome b6, subunit IV (17 kDa polypeptide, PetD), cytochrome f and the Rieske protein, while the 4 small subunits are PetG, PetL, PetM and PetN. The complex functions as a dimer. Heme b serves as cofactor. It depends on heme c as a cofactor.

It is found in the plastid. The protein localises to the chloroplast thylakoid membrane. Functionally, component of the cytochrome b6-f complex, which mediates electron transfer between photosystem II (PSII) and photosystem I (PSI), cyclic electron flow around PSI, and state transitions. In Saccharum hybrid (Sugarcane), this protein is Cytochrome b6.